We begin with the raw amino-acid sequence, 275 residues long: Phosphate import ATP-binding protein PstB (275 aa).

In terms of domain architecture, ABC transporter spans 29–270; the sequence is LEIKDLDLYY…PNKKKTEDYI (242 aa). 61 to 68 contacts ATP; sequence GPSGCGKS.

Belongs to the ABC transporter superfamily. Phosphate importer (TC 3.A.1.7) family. In terms of assembly, the complex is composed of two ATP-binding proteins (PstB), two transmembrane proteins (PstC and PstA) and a solute-binding protein (PstS).

It is found in the cell inner membrane. It catalyses the reaction phosphate(out) + ATP + H2O = ADP + 2 phosphate(in) + H(+). Its function is as follows. Part of the ABC transporter complex PstSACB involved in phosphate import. Responsible for energy coupling to the transport system. The chain is Phosphate import ATP-binding protein PstB from Pseudoalteromonas translucida (strain TAC 125).